Consider the following 335-residue polypeptide: Erlin-2-A (335 aa).

Topologically, residues 1–2 (MS) are cytoplasmic. Residues 3 to 23 (HAGAIVGLGVALIAAALFSAI) form a helical membrane-spanning segment. Topologically, residues 24-335 (HKIEEGHVGV…GLDEAASAEE (312 aa)) are lumenal. Asn-106 is a glycosylation site (N-linked (GlcNAc...) asparagine).

It belongs to the band 7/mec-2 family.

Its subcellular location is the endoplasmic reticulum membrane. Functionally, mediates the endoplasmic reticulum-associated degradation (ERAD) of inositol 1,4,5-trisphosphate receptors (IP3Rs). Promotes sterol-accelerated ERAD of HMGCR. Involved in regulation of cellular cholesterol homeostasis by regulation the SREBP signaling pathway. This is Erlin-2-A (erlin2-a) from Xenopus laevis (African clawed frog).